A 159-amino-acid polypeptide reads, in one-letter code: Keratin-associated protein 9-8 (159 aa).

15 consecutive repeat copies span residues 8-12 (CCQPT), 13-17 (CCRTT), 32-36 (CCQPS), 37-41 (CCVSS), 46-50 (CCRPT), 51-55 (CCQNT), 56-60 (CCQPI), 65-69 (CCQPS), 70-74 (CCSTP), 75-79 (CCQPT), 80-84 (CCGQT), 129-133 (CCRPA), 134-138 (CCETT), 139-142 (CCRT), and 153-157 (CCQPS). Positions 8 to 157 (CCQPTCCRTT…TCVSSCCQPS (150 aa)) are 15 X 5 AA repeats of C-C-[RQVSGE]-[SPSNQ]-[TASPI].

This sequence belongs to the KRTAP type 9 family. Interacts with hair keratins.

In the hair cortex, hair keratin intermediate filaments are embedded in an interfilamentous matrix, consisting of hair keratin-associated proteins (KRTAP), which are essential for the formation of a rigid and resistant hair shaft through their extensive disulfide bond cross-linking with abundant cysteine residues of hair keratins. The matrix proteins include the high-sulfur and high-glycine-tyrosine keratins. The chain is Keratin-associated protein 9-8 (KRTAP9-8) from Homo sapiens (Human).